We begin with the raw amino-acid sequence, 153 residues long: Superoxide dismutase [Cu-Zn] (153 aa).

Cu cation-binding residues include His45, His47, and His62. An intrachain disulfide couples Cys56 to Cys145. Zn(2+) is bound by residues His62, His70, His79, and Asp82. His119 is a Cu cation binding site.

Belongs to the Cu-Zn superoxide dismutase family. Homodimer. Cu cation serves as cofactor. Zn(2+) is required as a cofactor.

The protein localises to the cytoplasm. It catalyses the reaction 2 superoxide + 2 H(+) = H2O2 + O2. Functionally, destroys radicals which are normally produced within the cells and which are toxic to biological systems. The chain is Superoxide dismutase [Cu-Zn] (Sod) from Chymomyza amoena.